A 217-amino-acid chain; its full sequence is ATP phosphoribosyltransferase (217 aa).

Belongs to the ATP phosphoribosyltransferase family. Short subfamily. In terms of assembly, heteromultimer composed of HisG and HisZ subunits.

It is found in the cytoplasm. It carries out the reaction 1-(5-phospho-beta-D-ribosyl)-ATP + diphosphate = 5-phospho-alpha-D-ribose 1-diphosphate + ATP. It functions in the pathway amino-acid biosynthesis; L-histidine biosynthesis; L-histidine from 5-phospho-alpha-D-ribose 1-diphosphate: step 1/9. In terms of biological role, catalyzes the condensation of ATP and 5-phosphoribose 1-diphosphate to form N'-(5'-phosphoribosyl)-ATP (PR-ATP). Has a crucial role in the pathway because the rate of histidine biosynthesis seems to be controlled primarily by regulation of HisG enzymatic activity. This chain is ATP phosphoribosyltransferase, found in Burkholderia lata (strain ATCC 17760 / DSM 23089 / LMG 22485 / NCIMB 9086 / R18194 / 383).